A 512-amino-acid polypeptide reads, in one-letter code: 2,3-bisphosphoglycerate-independent phosphoglycerate mutase (512 aa).

Residues D18 and S68 each coordinate Mn(2+). S68 acts as the Phosphoserine intermediate in catalysis. Substrate contacts are provided by residues H129, 159-160, R191, R197, 265-268, and K338; these read RD and RPDR. Mn(2+)-binding residues include D403, H407, D444, H445, and H462.

This sequence belongs to the BPG-independent phosphoglycerate mutase family. As to quaternary structure, monomer. Requires Mn(2+) as cofactor.

The catalysed reaction is (2R)-2-phosphoglycerate = (2R)-3-phosphoglycerate. The protein operates within carbohydrate degradation; glycolysis; pyruvate from D-glyceraldehyde 3-phosphate: step 3/5. Its function is as follows. Catalyzes the interconversion of 2-phosphoglycerate and 3-phosphoglycerate. The sequence is that of 2,3-bisphosphoglycerate-independent phosphoglycerate mutase from Mesomycoplasma hyopneumoniae (strain 232) (Mycoplasma hyopneumoniae).